The sequence spans 313 residues: ADP-L-glycero-D-manno-heptose-6-epimerase (313 aa).

NADP(+) is bound by residues Met10–Ile11, Asp31–Asn32, Lys38, Lys53, Glu75–Ser79, and Asn92. The active-site Proton acceptor is Tyr139. Lys143 is a binding site for NADP(+). Position 174 (Asn174) interacts with substrate. 2 residues coordinate NADP(+): Val175 and Lys183. The Proton acceptor role is filled by Lys183. Residues Ser185, His192, Phe206 to Ser209, Arg214, and Tyr277 each bind substrate.

The protein belongs to the NAD(P)-dependent epimerase/dehydratase family. HldD subfamily. As to quaternary structure, homopentamer. NADP(+) serves as cofactor.

It carries out the reaction ADP-D-glycero-beta-D-manno-heptose = ADP-L-glycero-beta-D-manno-heptose. It functions in the pathway nucleotide-sugar biosynthesis; ADP-L-glycero-beta-D-manno-heptose biosynthesis; ADP-L-glycero-beta-D-manno-heptose from D-glycero-beta-D-manno-heptose 7-phosphate: step 4/4. In terms of biological role, catalyzes the interconversion between ADP-D-glycero-beta-D-manno-heptose and ADP-L-glycero-beta-D-manno-heptose via an epimerization at carbon 6 of the heptose. In Aliivibrio fischeri (strain ATCC 700601 / ES114) (Vibrio fischeri), this protein is ADP-L-glycero-D-manno-heptose-6-epimerase.